The primary structure comprises 217 residues: 3-isopropylmalate dehydratase small subunit (217 aa).

Belongs to the LeuD family. LeuD type 1 subfamily. As to quaternary structure, heterodimer of LeuC and LeuD.

The enzyme catalyses (2R,3S)-3-isopropylmalate = (2S)-2-isopropylmalate. The protein operates within amino-acid biosynthesis; L-leucine biosynthesis; L-leucine from 3-methyl-2-oxobutanoate: step 2/4. In terms of biological role, catalyzes the isomerization between 2-isopropylmalate and 3-isopropylmalate, via the formation of 2-isopropylmaleate. This Delftia acidovorans (strain DSM 14801 / SPH-1) protein is 3-isopropylmalate dehydratase small subunit.